Reading from the N-terminus, the 182-residue chain is Succinate dehydrogenase [ubiquinone] cytochrome b small subunit, mitochondrial (182 aa).

Over 1-71 the chain is Mitochondrial matrix; it reads MSLSLLLRGA…SAPRMASAGS (71 aa). A helical membrane pass occupies residues 72–96; it reads SHTLLWTVERIVSAGLLAVIPAAFI. The Mitochondrial intermembrane segment spans residues 97–101; that stretch reads APSQV. Residues 102-122 form a helical membrane-spanning segment; that stretch reads LDALMAISVVIHTHWGVEAMV. Histidine 113 contacts heme. The Mitochondrial matrix segment spans residues 123–135; sequence VDYMRPSVVGNVL. Residue tyrosine 125 coordinates a ubiquinone. The helical transmembrane segment at 136 to 157 threads the bilayer; it reads PKVAHIALIIISVATLGGLFYF. Residues 158 to 182 lie on the Mitochondrial intermembrane side of the membrane; it reads IQNDVGLANGIKRFWAIKGKDAEKA.

The protein belongs to the CybS family. As to quaternary structure, forms part of complex II containing four subunits: a flavoprotein (FP), an iron-sulfur protein (IP) and a cytochrome b composed of a large and a small subunit.

The protein resides in the mitochondrion inner membrane. It functions in the pathway carbohydrate metabolism; tricarboxylic acid cycle. In terms of biological role, membrane-anchoring subunit of succinate dehydrogenase (SDH) that is involved in complex II of the mitochondrial electron transport chain and is responsible for transferring electrons from succinate to ubiquinone (coenzyme Q). This Drosophila melanogaster (Fruit fly) protein is Succinate dehydrogenase [ubiquinone] cytochrome b small subunit, mitochondrial.